Here is a 243-residue protein sequence, read N- to C-terminus: Ribonuclease 3 (243 aa).

The region spanning Ile-10–Gly-146 is the RNase III domain. Mg(2+) is bound at residue Glu-59. Residue Asp-63 is part of the active site. Mg(2+) contacts are provided by Asp-132 and Glu-135. Glu-135 is a catalytic residue. A DRBM domain is found at Asp-172–Gln-241. The segment covering Gly-219–Ala-231 has biased composition (basic and acidic residues). Positions Gly-219 to Lys-243 are disordered.

It belongs to the ribonuclease III family. As to quaternary structure, homodimer. Mg(2+) is required as a cofactor.

It is found in the cytoplasm. It carries out the reaction Endonucleolytic cleavage to 5'-phosphomonoester.. Functionally, digests double-stranded RNA. Involved in the processing of primary rRNA transcript to yield the immediate precursors to the large and small rRNAs (23S and 16S). Processes some mRNAs, and tRNAs when they are encoded in the rRNA operon. Processes pre-crRNA and tracrRNA of type II CRISPR loci if present in the organism. This chain is Ribonuclease 3, found in Staphylococcus aureus (strain bovine RF122 / ET3-1).